Here is a 295-residue protein sequence, read N- to C-terminus: Small ribosomal subunit protein uS2 (295 aa).

The disordered stretch occupies residues 263-295 (KKFSKTKNIDEETNTEFEQALNDADENKNSDNA).

The protein belongs to the universal ribosomal protein uS2 family.

The polypeptide is Small ribosomal subunit protein uS2 (Rickettsia massiliae (strain Mtu5)).